The chain runs to 126 residues: RutC family protein PH0854 (126 aa).

It belongs to the RutC family.

The sequence is that of RutC family protein PH0854 from Pyrococcus horikoshii (strain ATCC 700860 / DSM 12428 / JCM 9974 / NBRC 100139 / OT-3).